Here is a 194-residue protein sequence, read N- to C-terminus: MNLMTTITGVVLAGGKARRMGGVDKGLLELNGKPLWQHVADALMTQLSHVVVNANRHQEIYQASGLKVIEDSLADYPGPLAGMLSVMQQEAGEWFLFCPCDTPYIPPDLAARLNHQRKDAPVVWVHDGERDHPTIALVNRAIEPLLLEYLQAGERRVMVFMRLAGGHAVDFSDHKDAFVNVNTPEELARWQEKR.

Residues 12–14, lysine 25, asparagine 53, aspartate 71, and aspartate 101 each bind GTP; that span reads LAG. Aspartate 101 contributes to the Mg(2+) binding site.

Belongs to the MobA family. As to quaternary structure, monomer. An equilibrium exists between a monomeric and oligomeric form of the enzyme, which could be an octamer; whether this oligomeric arrangement is of functional relevance is unclear. Interacts with MoeA and MobB in vivo. The cofactor is Mg(2+). Requires Mn(2+) as cofactor.

The protein resides in the cytoplasm. It catalyses the reaction Mo-molybdopterin + GTP + H(+) = Mo-molybdopterin guanine dinucleotide + diphosphate. Functionally, transfers a GMP moiety from GTP to Mo-molybdopterin (Mo-MPT) cofactor (Moco or molybdenum cofactor) to form Mo-molybdopterin guanine dinucleotide (Mo-MGD) cofactor. Is also involved in the biosynthesis of the bis-MGD form of the Moco cofactor (Mo-bisMGD) in which the metal is symmetrically ligated by the dithiolene groups of two MGD molecules. Is necessary and sufficient for the in vitro activation of the DMSOR molybdoenzyme that uses the Mo-bisMGD form of molybdenum cofactor, which implies formation and efficient insertion of the cofactor into the enzyme without the need of a chaperone. Is specific for GTP since other nucleotides such as ATP and GMP cannot be utilized. The protein is Molybdenum cofactor guanylyltransferase (mobA) of Escherichia coli (strain K12).